A 282-amino-acid chain; its full sequence is 2-dehydro-3-deoxyphosphooctonate aldolase (282 aa).

It belongs to the KdsA family.

The protein resides in the cytoplasm. The catalysed reaction is D-arabinose 5-phosphate + phosphoenolpyruvate + H2O = 3-deoxy-alpha-D-manno-2-octulosonate-8-phosphate + phosphate. It functions in the pathway carbohydrate biosynthesis; 3-deoxy-D-manno-octulosonate biosynthesis; 3-deoxy-D-manno-octulosonate from D-ribulose 5-phosphate: step 2/3. The protein operates within bacterial outer membrane biogenesis; lipopolysaccharide biosynthesis. The sequence is that of 2-dehydro-3-deoxyphosphooctonate aldolase from Shewanella amazonensis (strain ATCC BAA-1098 / SB2B).